Consider the following 149-residue polypeptide: Protein cornichon homolog 2 (149 aa).

Helical transmembrane passes span 3–23 (IELILWLFSFASIMVLIGLTA), 59–79 (ALCASFLLTLHWFPFLVMAPV), and 117–137 (YFSLFIITIYRLVMTAVTLFI).

The protein belongs to the cornichon family.

Its subcellular location is the endoplasmic reticulum membrane. It is found in the golgi apparatus membrane. Acts as a cargo receptor necessary for the transportation of secretory proteins from the endoplasmic reticulum (ER) in COPII-coated vesicles targeted to the Golgi apparatus. The protein is Protein cornichon homolog 2 of Oryza sativa subsp. japonica (Rice).